Here is a 236-residue protein sequence, read N- to C-terminus: Ribonuclease 3 (236 aa).

An RNase III domain is found at 6-140 (FLDFLKQNRI…FIGAVAQDQG (135 aa)). Residue Glu-46 participates in Mg(2+) binding. Asp-50 is a catalytic residue. Positions 126 and 129 each coordinate Mg(2+). Residue Glu-129 is part of the active site. Residues 166–231 (DYKTIFQEQA…AKNAILKLDD (66 aa)) form the DRBM domain.

It belongs to the ribonuclease III family. In terms of assembly, homodimer. It depends on Mg(2+) as a cofactor.

It is found in the cytoplasm. The catalysed reaction is Endonucleolytic cleavage to 5'-phosphomonoester.. Functionally, digests double-stranded RNA. Involved in the processing of primary rRNA transcript to yield the immediate precursors to the large and small rRNAs (23S and 16S). Processes some mRNAs, and tRNAs when they are encoded in the rRNA operon. Processes pre-crRNA and tracrRNA of type II CRISPR loci if present in the organism. The polypeptide is Ribonuclease 3 (Ureaplasma parvum serovar 3 (strain ATCC 700970)).